Here is a 514-residue protein sequence, read N- to C-terminus: 2,3-bisphosphoglycerate-independent phosphoglycerate mutase (514 aa).

Residues D13 and S63 each contribute to the Mn(2+) site. S63 acts as the Phosphoserine intermediate in catalysis. Substrate is bound by residues H124, 154–155 (RD), R186, R192, 258–261 (RADR), and K332. Residues D399, H403, D440, H441, and H459 each coordinate Mn(2+).

The protein belongs to the BPG-independent phosphoglycerate mutase family. Monomer. Mn(2+) is required as a cofactor.

The enzyme catalyses (2R)-2-phosphoglycerate = (2R)-3-phosphoglycerate. It functions in the pathway carbohydrate degradation; glycolysis; pyruvate from D-glyceraldehyde 3-phosphate: step 3/5. Functionally, catalyzes the interconversion of 2-phosphoglycerate and 3-phosphoglycerate. The polypeptide is 2,3-bisphosphoglycerate-independent phosphoglycerate mutase (Legionella pneumophila (strain Paris)).